The primary structure comprises 256 residues: Calsenilin (256 aa).

Positions 1–30 (MQRAKEVMKVSDGSLLGEPGRTPLSKKEGV) are disordered. A Phosphoserine modification is found at Ser14. Lys26 participates in a covalent cross-link: Glycyl lysine isopeptide (Lys-Gly) (interchain with G-Cter in SUMO1). 2 S-palmitoyl cysteine lipidation sites follow: Cys45 and Cys46. A phosphoserine mark is found at Ser60 and Ser63. An EF-hand 1; degenerate domain is found at 67-123 (LELSAVRHQPEGLDQLQAQTKFTKKELQSLYRGFKNECPTGLVDEDTFKLIYSQFFP). Lys90 is covalently cross-linked (Glycyl lysine isopeptide (Lys-Gly) (interchain with G-Cter in SUMO1)). 3 consecutive EF-hand domains span residues 126 to 161 (DATT…LLRG), 162 to 197 (TVHE…IYDM), and 210 to 245 (APLE…DENI). 9 residues coordinate Ca(2+): Asp175, Asn177, Asp179, Tyr181, Glu186, Asp223, Asn225, Asp227, and Glu234. The interval 243–256 (ENIMSSMQLFENVI) is interaction with KCND2.

Belongs to the recoverin family. As to quaternary structure, binds to DNA as a homomultimer. Dimerization is induced by binding to calcium. Interacts with the C-terminus of PSEN1 and PSEN2 and with PSEN2 CTF subunit. Associates with KCN1. Component of heteromultimeric potassium channels. Identified in potassium channel complexes containing KCND1, KCND2, KCND3, KCNIP1, KCNIP2, KCNIP3, KCNIP4, DPP6 and DPP10. Interacts with KCND2 and KCND3. Palmitoylated. Palmitoylation enhances association with the plasma membrane. Post-translationally, proteolytically cleaved by caspase-3.

The protein localises to the cytoplasm. Its subcellular location is the cell membrane. It is found in the endoplasmic reticulum. The protein resides in the golgi apparatus. It localises to the nucleus. In terms of biological role, regulatory subunit of Kv4/D (Shal)-type voltage-gated rapidly inactivating A-type potassium channels, such as KCND2/Kv4.2 and KCND3/Kv4.3. Modulates channel expression at the cell membrane, gating characteristics, inactivation kinetics and rate of recovery from inactivation in a calcium-dependent and isoform-specific manner. Functionally, may play a role in the regulation of PSEN2 proteolytic processing and apoptosis. Together with PSEN2 involved in modulation of amyloid-beta formation. Calcium-dependent transcriptional repressor that binds to the DRE element of genes including PDYN and FOS. Affinity for DNA is reduced upon binding to calcium and enhanced by binding to magnesium. Seems to be involved in nociception. The sequence is that of Calsenilin (KCNIP3) from Bos taurus (Bovine).